A 145-amino-acid chain; its full sequence is Small ribosomal subunit protein uS19 (145 aa).

N-acetylalanine is present on Ala2. A Glycyl lysine isopeptide (Lys-Gly) (interchain with G-Cter in SUMO2) cross-link involves residue Lys108.

Belongs to the universal ribosomal protein uS19 family. In terms of assembly, component of the small ribosomal subunit.

Its subcellular location is the cytoplasm. In terms of biological role, component of the small ribosomal subunit. The ribosome is a large ribonucleoprotein complex responsible for the synthesis of proteins in the cell. This chain is Small ribosomal subunit protein uS19 (RPS15), found in Mesocricetus auratus (Golden hamster).